The following is a 285-amino-acid chain: Large ribosomal subunit protein uL1m (285 aa).

The N-terminal 19 residues, 1–19 (MLSVVAIPKICVTGPARRC), are a transit peptide targeting the mitochondrion.

The protein belongs to the universal ribosomal protein uL1 family. Component of the mitochondrial large ribosomal subunit (mt-LSU). Mature yeast 74S mitochondrial ribosomes consist of a small (37S) and a large (54S) subunit. The 37S small subunit contains a 15S ribosomal RNA (15S mt-rRNA) and 34 different proteins. The 54S large subunit contains a 21S rRNA (21S mt-rRNA) and 46 different proteins.

It localises to the mitochondrion. In terms of biological role, component of the mitochondrial ribosome (mitoribosome), a dedicated translation machinery responsible for the synthesis of mitochondrial genome-encoded proteins, including at least some of the essential transmembrane subunits of the mitochondrial respiratory chain. The mitoribosomes are attached to the mitochondrial inner membrane and translation products are cotranslationally integrated into the membrane. In Saccharomyces cerevisiae (strain ATCC 204508 / S288c) (Baker's yeast), this protein is Large ribosomal subunit protein uL1m (MRPL1).